A 153-amino-acid polypeptide reads, in one-letter code: Ribonuclease K6 (153 aa).

The first 27 residues, M1–Q27, serve as a signal peptide directing secretion. The Proton acceptor role is filled by H41. Intrachain disulfides connect C49–C107, C63–C117, C81–C132, and C88–C95. N58 is a glycosylation site (N-linked (GlcNAc...) asparagine). K64–T68 contacts substrate. N85 carries an N-linked (GlcNAc...) asparagine glycan. K89 lines the substrate pocket. Catalysis depends on H148, which acts as the Proton donor.

The protein belongs to the pancreatic ribonuclease family. Interacts (via N-terminus) with bacterial lipopolysaccharide (LPS). As to expression, highly expressed in spleen (at protein level). Has little or no expression in healthy kidneys (at protein level). Detected at high levels in infected kidneys (at protein level). Expressed at low levels in bladder. Also detected in skeletal muscle, heart and bone marrow.

It is found in the secreted. The protein resides in the lysosome. The protein localises to the cytoplasmic granule. Its function is as follows. Ribonuclease which shows a preference for the pyrimidines uridine and cytosine. Has potent antibacterial activity against a range of Gram-positive and Gram-negative bacteria, including P.aeruginosa, A.baumanii, M.luteus, S.aureus, E.faecalis, E.faecium, S.saprophyticus and E.coli. Causes loss of bacterial membrane integrity, and also promotes agglutination of Gram-negative bacteria. Probably contributes to urinary tract sterility. Bactericidal activity is independent of RNase activity. This chain is Ribonuclease K6 (Rnase6), found in Mus musculus (Mouse).